Reading from the N-terminus, the 640-residue chain is RecBCD enzyme subunit RecD (640 aa).

Gly-194 to Thr-201 is an ATP binding site.

It belongs to the RecD family. In terms of assembly, heterotrimer of RecB, RecC and RecD. All subunits contribute to DNA-binding.

The enzyme catalyses Couples ATP hydrolysis with the unwinding of duplex DNA at the replication fork by translocating in the 5'-3' direction. This creates two antiparallel DNA single strands (ssDNA). The leading ssDNA polymer is the template for DNA polymerase III holoenzyme which synthesizes a continuous strand.. It catalyses the reaction ATP + H2O = ADP + phosphate + H(+). A helicase/nuclease that prepares dsDNA breaks (DSB) for recombinational DNA repair. Binds to DSBs and unwinds DNA via a highly rapid and processive ATP-dependent bidirectional helicase activity. Unwinds dsDNA until it encounters a Chi (crossover hotspot instigator) sequence from the 3' direction. Cuts ssDNA a few nucleotides 3' to the Chi site. The properties and activities of the enzyme are changed at Chi. The Chi-altered holoenzyme produces a long 3'-ssDNA overhang and facilitates RecA-binding to the ssDNA for homologous DNA recombination and repair. Holoenzyme degrades any linearized DNA that is unable to undergo homologous recombination. In the holoenzyme this subunit has ssDNA-dependent ATPase and 5'-3' helicase activity. When added to pre-assembled RecBC greatly stimulates nuclease activity and augments holoenzyme processivity. Negatively regulates the RecA-loading ability of RecBCD. In Haemophilus influenzae (strain ATCC 51907 / DSM 11121 / KW20 / Rd), this protein is RecBCD enzyme subunit RecD.